The chain runs to 58 residues: Metallothionein (58 aa).

Residues M1 to S29 are beta. A divalent metal cation contacts are provided by C5, C6, C10, C12, C17, C21, C23, C26, C28, C31, C34, C38, C40, C46, C50, C54, C56, and C57. The segment at P30–P58 is alpha.

Functionally, metallothioneins have a high content of cysteine residues that bind various heavy metals. Class I MTS in crustacea are involved in the sequestration of elevated levels of heavy-metal ions. In Astacus astacus (Noble crayfish), this protein is Metallothionein.